Here is a 502-residue protein sequence, read N- to C-terminus: RxLR effector protein BLN06 (502 aa).

The first 20 residues, 1 to 20, serve as a signal peptide directing secretion; it reads MTLLHCWLLLVGHLASTAYA. Asparagine 38 carries N-linked (GlcNAc...) asparagine glycosylation. A dEER motif is present at residues 50-53; sequence LEER.

The protein belongs to the RxLR effector family.

Its subcellular location is the secreted. The protein localises to the host cell membrane. Secreted effector that triggers a robust hypersensitive response (HR) in Lactuca serriola LS102. The response to BLN06 was visible as chlorosis but not as strong necrosis. This chain is RxLR effector protein BLN06, found in Bremia lactucae (Lettuce downy mildew).